Consider the following 96-residue polypeptide: Venom protein 3.1 (96 aa).

Positions 1–25 (MKFSLISVFLFAVFLSNENIFQAIA) are cleaved as a signal peptide. A disordered region spans residues 45-84 (EAVMSSSLTNEEESRNWPHRATRNTLEKGQKRSPAARSEI).

It belongs to the non-disulfide-bridged peptide (NDBP) superfamily. Expressed by the venom gland.

The protein resides in the secreted. The sequence is that of Venom protein 3.1 from Lychas mucronatus (Chinese swimming scorpion).